We begin with the raw amino-acid sequence, 767 residues long: RNA cytosine C(5)-methyltransferase NSUN2 (767 aa).

Residues 1–36 (MGRRSRGRRLQQQQRPEDAEDGAEGGGKRGEAGWEG) form a disordered region. Lys46 is covalently cross-linked (Glycyl lysine isopeptide (Lys-Gly) (interchain with G-Cter in SUMO2)). The residue at position 139 (Ser139) is a Phosphoserine; by AURKB. S-adenosyl-L-methionine-binding positions include 184 to 190 (CAAPGSK), Asp215, Asp242, and Asp268. The Nucleophile role is filled by Cys321. Residues 436–481 (NKRQPKLQGKSAETRESTQLSPADLTEGKPTDPSKLESPSFTGTGD) form a disordered region. Residue Ser456 is modified to Phosphoserine. A compositionally biased stretch (basic and acidic residues) spans 461 to 470 (TEGKPTDPSK). Residues Lys464 and Lys470 each participate in a glycyl lysine isopeptide (Lys-Gly) (interchain with G-Cter in SUMO2) cross-link. Position 473 is a phosphoserine (Ser473). Residues Lys511 and Lys516 each participate in a glycyl lysine isopeptide (Lys-Gly) (interchain with G-Cter in SUMO2) cross-link. Position 586 is an N6-acetyllysine; alternate (Lys586). At Lys586 the chain carries N6-malonyllysine; alternate. Lys586 participates in a covalent cross-link: Glycyl lysine isopeptide (Lys-Gly) (interchain with G-Cter in SUMO2); alternate. Phosphoserine is present on Ser593. Glycyl lysine isopeptide (Lys-Gly) (interchain with G-Cter in SUMO2) cross-links involve residues Lys640, Lys654, and Lys660. Thr718 carries the post-translational modification Phosphothreonine. The segment covering 719 to 730 (NESAASTGQPDN) has biased composition (polar residues). Residues 719 to 767 (NESAASTGQPDNDVTEGQRAGEPNSPDAEEANSPDVTAGCDPAGVHPPR) are disordered. Ser724, Ser743, and Ser751 each carry phosphoserine.

Belongs to the class I-like SAM-binding methyltransferase superfamily. RsmB/NOP family. TRM4 subfamily. In terms of assembly, interacts with NPM1 and NCL during interphase; interaction is disrupted following phosphorylation at Ser-139. In terms of processing, phosphorylated at Ser-139 by AURKB during mitosis, leading to abolish methyltransferase activity and the interaction with NPM1. Expressed in adult and fetal brain and in lymphoblastoid cells.

Its subcellular location is the nucleus. It is found in the nucleolus. The protein localises to the cytoplasm. The protein resides in the mitochondrion. It localises to the cytoskeleton. Its subcellular location is the spindle. It is found in the secreted. The protein localises to the extracellular exosome. The catalysed reaction is cytidine(48) in tRNA + S-adenosyl-L-methionine = 5-methylcytidine(48) in tRNA + S-adenosyl-L-homocysteine + H(+). It catalyses the reaction cytidine(49) in tRNA + S-adenosyl-L-methionine = 5-methylcytidine(49) in tRNA + S-adenosyl-L-homocysteine + H(+). The enzyme catalyses cytidine(50) in tRNA + S-adenosyl-L-methionine = 5-methylcytidine(50) in tRNA + S-adenosyl-L-homocysteine + H(+). It carries out the reaction cytidine(34) in tRNA precursor + S-adenosyl-L-methionine = 5-methylcytidine(34) in tRNA precursor + S-adenosyl-L-homocysteine + H(+). The catalysed reaction is a cytidine in mRNA + S-adenosyl-L-methionine = a 5-methylcytidine in mRNA + S-adenosyl-L-homocysteine + H(+). Inhibited by magnesium ions. In terms of biological role, RNA cytosine C(5)-methyltransferase that methylates cytosine to 5-methylcytosine (m5C) in various RNAs, such as tRNAs, mRNAs and some long non-coding RNAs (lncRNAs). Involved in various processes, such as epidermal stem cell differentiation, testis differentiation and maternal to zygotic transition during early development: acts by increasing protein synthesis; cytosine C(5)-methylation promoting tRNA stability and preventing mRNA decay. Methylates cytosine to 5-methylcytosine (m5C) at positions 34 and 48 of intron-containing tRNA(Leu)(CAA) precursors, and at positions 48, 49 and 50 of tRNA(Gly)(GCC) precursors. tRNA methylation is required generation of RNA fragments derived from tRNAs (tRFs). Also mediates C(5)-methylation of mitochondrial tRNAs. Catalyzes cytosine C(5)-methylation of mRNAs, leading to stabilize them and prevent mRNA decay: mRNA stabilization involves YBX1 that specifically recognizes and binds m5C-modified transcripts. Cytosine C(5)-methylation of mRNAs also regulates mRNA export: methylated transcripts are specifically recognized by THOC4/ALYREF, which mediates mRNA nucleo-cytoplasmic shuttling. Also mediates cytosine C(5)-methylation of non-coding RNAs, such as vault RNAs (vtRNAs), promoting their processing into regulatory small RNAs. Cytosine C(5)-methylation of vtRNA VTRNA1.1 promotes its processing into small-vault RNA4 (svRNA4) and regulates epidermal differentiation. May act downstream of Myc to regulate epidermal cell growth and proliferation. Required for proper spindle assembly and chromosome segregation, independently of its methyltransferase activity. The polypeptide is RNA cytosine C(5)-methyltransferase NSUN2 (Homo sapiens (Human)).